Consider the following 227-residue polypeptide: MEISGLVYLIIIVTIIDLPYGKANNYCKIKCLKGGVHTACKYGSLKPNCGNKVVVSYGLTKQEKQDILKEHNDFRQKVARGLETRGNPGPQPPAKNMKNLVWNDELAYVAQVWANQCQYGHDTCRDVAKYQVGQNVALTGSTAAKYENPVNLVKMWENEVKDYNPKKKFSENNFIKIGHYTQMVWANTKEIGCGSMKYTENKWHYHYLVCNYGPSGNFGNEELYQTK.

An N-terminal signal peptide occupies residues 1-23; the sequence is MEISGLVYLIIIVTIIDLPYGKA. 4 cysteine pairs are disulfide-bonded: Cys27/Cys40, Cys31/Cys124, Cys49/Cys117, and Cys193/Cys210. One can recognise an SCP domain in the interval 68-212; it reads LKEHNDFRQK…WHYHYLVCNY (145 aa).

The protein belongs to the CRISP family. Venom allergen 5-like subfamily. In terms of tissue distribution, expressed by the venom gland.

The protein localises to the secreted. The chain is Venom allergen 5 from Vespula maculifrons (Eastern yellow jacket).